Consider the following 120-residue polypeptide: Anti-adapter protein IraM (120 aa).

Belongs to the IraM/RssC family.

It localises to the cytoplasm. Involved in the stabilization of the sigma stress factor RpoS. This chain is Anti-adapter protein IraM, found in Salmonella typhimurium (strain LT2 / SGSC1412 / ATCC 700720).